The primary structure comprises 298 residues: MPVDKNLRDLEPGIHTDLEGRLTYGGYLRLDQLLSAQQPLSEPAHHDEMLFIIQHQTSELWLKLLAHELRAAIVHLQRDEVWQCRKVLARSKQVLRQLTEQWSVLETLTPSEYMGFRDVLGPSSGFQSLQYRYIEFLLGNKNPQMLQVFAYDPHGQARLREALEAPSLYEEFLRYLARFGHAIPQHYQARDWTAAHVADDSLRPVFERIYENTDRYWREYALCEDLVDVETQFQLWRFRHMRTVMRVIGFKRGTGGSSGVGFLQQALALTFFPELFDVRTSVGVDGRPPQGAPDAAQG.

Substrate contacts are provided by residues 51–55 (FIIQH), Y113, and R117. H240 is a heme binding site. Position 254 (T254) interacts with substrate.

It belongs to the tryptophan 2,3-dioxygenase family. Homotetramer. Heme is required as a cofactor.

The catalysed reaction is L-tryptophan + O2 = N-formyl-L-kynurenine. Its pathway is amino-acid degradation; L-tryptophan degradation via kynurenine pathway; L-kynurenine from L-tryptophan: step 1/2. In terms of biological role, heme-dependent dioxygenase that catalyzes the oxidative cleavage of the L-tryptophan (L-Trp) pyrrole ring and converts L-tryptophan to N-formyl-L-kynurenine. Catalyzes the oxidative cleavage of the indole moiety. This Xanthomonas euvesicatoria pv. vesicatoria (strain 85-10) (Xanthomonas campestris pv. vesicatoria) protein is Tryptophan 2,3-dioxygenase.